The chain runs to 302 residues: Urease accessory protein UreG (302 aa).

Basic and acidic residues-rich tracts occupy residues 1–32, 40–56, and 64–76; these read MHDPGEHGHGRHDHDHDHDHVHDHDHDHDHVH, HEHEHAHEHAHGHEHGH, and HAHEHAHGHTHEH. Residues 1 to 76 form a disordered region; it reads MHDPGEHGHG…EHAHGHTHEH (76 aa). Residue 105–112 coordinates GTP; sequence GPVGSGKT.

It belongs to the SIMIBI class G3E GTPase family. UreG subfamily. Homodimer. UreD, UreF and UreG form a complex that acts as a GTP-hydrolysis-dependent molecular chaperone, activating the urease apoprotein by helping to assemble the nickel containing metallocenter of UreC. The UreE protein probably delivers the nickel.

It localises to the cytoplasm. Facilitates the functional incorporation of the urease nickel metallocenter. This process requires GTP hydrolysis, probably effectuated by UreG. The sequence is that of Urease accessory protein UreG from Sorangium cellulosum (strain So ce56) (Polyangium cellulosum (strain So ce56)).